The chain runs to 593 residues: MVEKTSKPSAKTEVAPPVKIIELGAAVSVKELADSLETNPVEVIKALMRKGIMANINQVIDFDIAKGVIEAAGFEAKLKILKKSAAKKASPAKEKLSNFPLRPPVVTIMGHVDHGKTRLLDAIRSTNVMEKEVGGITQHIGAYQVEIKGHKITFLDTPGHEAFTAMRARGAQATDITILVVAADDGVMPQTLEALDHAKAAGVPIILAINKMDKPEANPDRVKQQLAEVGLVVEEWGGDTLAIPTSARENKGINELLEAVLLIAELEDLRADPNQPASGVVIEAEMDKTKGPMATVLVQSGTLKLGDTVVAGNTWGRVKAMFNDVGKRIKKAEPSTPVALLGMESVPQVGDKIIAVATEKQARDMVNENSQSTRKTNAVSLTNVYDQVSQGNIKELNIILKTDVQGSLEPIKDSLEKLSTDKIKININRSGAGNVTESDVMLAMASGGLIIGFSTGIETNAQRLADAEDIDIRHYDIIYKLIEDVDKALQGLLEPTIKEVIDGRAEVRAVFESTKKLSIAGCMVLEGKLVKNSQVRLLRGGEVIVDAPSNSLRRFKEDVKEVVAGYECGVGLKDFNEFQKSDILEFYHKEKSR.

In terms of domain architecture, tr-type G spans 101–270 (LRPPVVTIMG…LLIAELEDLR (170 aa)). The tract at residues 110–117 (GHVDHGKT) is G1. 110-117 (GHVDHGKT) lines the GTP pocket. A G2 region spans residues 135-139 (GITQH). Residues 156–159 (DTPG) form a G3 region. Residues 156–160 (DTPGH) and 210–213 (NKMD) each bind GTP. Residues 210–213 (NKMD) are G4. The tract at residues 246-248 (SAR) is G5.

It belongs to the TRAFAC class translation factor GTPase superfamily. Classic translation factor GTPase family. IF-2 subfamily.

It is found in the cytoplasm. One of the essential components for the initiation of protein synthesis. Protects formylmethionyl-tRNA from spontaneous hydrolysis and promotes its binding to the 30S ribosomal subunits. Also involved in the hydrolysis of GTP during the formation of the 70S ribosomal complex. The polypeptide is Translation initiation factor IF-2 (Dehalococcoides mccartyi (strain CBDB1)).